We begin with the raw amino-acid sequence, 57 residues long: Large ribosomal subunit protein bL32 (57 aa).

Basic residues predominate over residues 1–20 (MAVPKKKTSKAKRDQRRATW). Residues 1-24 (MAVPKKKTSKAKRDQRRATWRRQA) are disordered.

Belongs to the bacterial ribosomal protein bL32 family.

The chain is Large ribosomal subunit protein bL32 from Gloeothece citriformis (strain PCC 7424) (Cyanothece sp. (strain PCC 7424)).